Consider the following 163-residue polypeptide: Acetolactate synthase isozyme 3 small subunit (163 aa).

Residues 4–78 form the ACT domain; it reads ILSVLLENES…DVLRVSELGQ (75 aa).

It belongs to the acetolactate synthase small subunit family. Dimer of large and small chains.

The enzyme catalyses 2 pyruvate + H(+) = (2S)-2-acetolactate + CO2. It participates in amino-acid biosynthesis; L-isoleucine biosynthesis; L-isoleucine from 2-oxobutanoate: step 1/4. Its pathway is amino-acid biosynthesis; L-valine biosynthesis; L-valine from pyruvate: step 1/4. Its activity is regulated as follows. Sensitive to valine inhibition. This is Acetolactate synthase isozyme 3 small subunit (ilvH) from Salmonella typhimurium (strain LT2 / SGSC1412 / ATCC 700720).